A 432-amino-acid chain; its full sequence is Adenylosuccinate synthetase (432 aa).

Residues 13 to 19 and 41 to 43 each bind GTP; these read GDEGKGK and GHT. Catalysis depends on D14, which acts as the Proton acceptor. Mg(2+) is bound by residues D14 and G41. Residues 14-17, 39-42, T130, R144, Q225, T240, and R304 contribute to the IMP site; these read DEGK and NAGH. Catalysis depends on H42, which acts as the Proton donor. A substrate-binding site is contributed by 300 to 306; the sequence is ATTGRSR. Residues R306, 332-334, and 415-417 contribute to the GTP site; these read KLD and STG.

This sequence belongs to the adenylosuccinate synthetase family. As to quaternary structure, homodimer. Requires Mg(2+) as cofactor.

It is found in the cytoplasm. The enzyme catalyses IMP + L-aspartate + GTP = N(6)-(1,2-dicarboxyethyl)-AMP + GDP + phosphate + 2 H(+). It functions in the pathway purine metabolism; AMP biosynthesis via de novo pathway; AMP from IMP: step 1/2. Functionally, plays an important role in the de novo pathway of purine nucleotide biosynthesis. Catalyzes the first committed step in the biosynthesis of AMP from IMP. This Marinomonas sp. (strain MWYL1) protein is Adenylosuccinate synthetase.